Consider the following 179-residue polypeptide: Lebocin-3 (179 aa).

Positions 1-16 (MYKFLVFSSVLVLFFA) are cleaved as a signal peptide. The propeptide occupies 17-120 (QASCQRFIQP…QPIESHRNTR (104 aa)). Residue threonine 135 is glycosylated (O-linked (GalNAc...) threonine). Residues 153 to 179 (RRHASEDQEELRQYNEHFLIPRDIFQE) constitute a propeptide that is removed on maturation.

This sequence belongs to the lebocin family. O-glycosylation is important for the antibacterial activity of lebocin. As to expression, hemolymph. Produced in fat body.

The protein resides in the secreted. Functionally, antibacterial peptide. The chain is Lebocin-3 (LEB3) from Bombyx mori (Silk moth).